Reading from the N-terminus, the 1115-residue chain is DNA-directed RNA polymerase subunit beta (1115 aa).

The tract at residues 1084 to 1115 is disordered; sequence HEAGEGEDDEYFEEDEEAVDDEPMTFDDDDME. A compositionally biased stretch (acidic residues) spans 1088 to 1115; that stretch reads EGEDDEYFEEDEEAVDDEPMTFDDDDME.

Belongs to the RNA polymerase beta chain family. The RNAP catalytic core consists of 2 alpha, 1 beta, 1 beta' and 1 omega subunit. When a sigma factor is associated with the core the holoenzyme is formed, which can initiate transcription.

The catalysed reaction is RNA(n) + a ribonucleoside 5'-triphosphate = RNA(n+1) + diphosphate. Its function is as follows. DNA-dependent RNA polymerase catalyzes the transcription of DNA into RNA using the four ribonucleoside triphosphates as substrates. The polypeptide is DNA-directed RNA polymerase subunit beta (Desulfitobacterium hafniense (strain DSM 10664 / DCB-2)).